The chain runs to 1299 residues: GRB10-interacting GYF protein 2 (1299 aa).

Residue A2 is modified to N-acetylalanine. Phosphoserine is present on residues S19, S26, and S30. Positions 40–50 match the 4EHP-binding motif motif; sequence DYRYGREEMLA. Omega-N-methylarginine occurs at positions 107, 118, and 120. Residues 112-131 are disordered; it reads TVVGAPRGRSSSRGRGRGRG. Position 139 is a phosphoserine (S139). Disordered regions lie at residues 147–195, 214–247, and 266–433; these read FGRG…RKHE, EDEDGGWRLAGSRRDGERWRPHSPDGPRSAGWRE, and RGYR…VADV. Position 149 is an omega-N-methylarginine (R149). Basic and acidic residues predominate over residues 151–182; it reads GGREMHRSQSWEERGDRRFEKPGRKDVGRPNF. Phosphoserine is present on residues S160, S189, and S236. Residues 225 to 247 show a composition bias toward basic and acidic residues; the sequence is SRRDGERWRPHSPDGPRSAGWRE. A DDX6 binding motif motif is present at residues 280–310; that stretch reads DDRDSLPEWCLEDAEEEMGTFDSSGAFLSLK. Residues 289–298 are compositionally biased toward acidic residues; it reads CLEDAEEEMG. Composition is skewed to basic and acidic residues over residues 312 to 329 and 338 to 363; these read VQKEPIPEEQEMDFRPVD and EGSHNEEAKEPDKTNKKEGEKTDRVG. Residues 369–392 are compositionally biased toward polar residues; sequence ETPQTSSSSARPGTPSDHQSQEAS. A Phosphothreonine modification is found at T382. S388 bears the Phosphoserine mark. Basic and acidic residues predominate over residues 393 to 414; the sequence is QFERKDEPKTEQTEKAEEETRM. Positions 533 to 581 constitute a GYF domain; that stretch reads MQKWYYKDPQGEIQGPFNNQEMAEWFQAGYFTMSLLVKRACDESFQPLG. Residues 547–563 form a required for GRB10-binding region; it reads GPFNNQEMAEWFQAGYF. S593 is modified (phosphoserine). 7 disordered regions span residues 733 to 793, 845 to 866, 872 to 891, 917 to 936, 957 to 997, 1009 to 1048, and 1084 to 1112; these read KAAK…QEEA, EEAAKWAREEEEAQRRLEENRL, AARLRHEEEERKRKELEVQR, QLAQMKLPSSSTWGQQSNTT, ERQL…KPSG, EARQMQKQQQQQQQHQQPNRARNNTHSNLHTSIGNSVWGS, and KEVGPRNSTNKNKNNASLSKSVGVSNRQN. The interval 860-919 is required for interaction with SARS-CoV-2 non-structural protein 2 (nsp2); it reads RLEENRLRMEEEAARLRHEEEERKRKELEVQRQKELMRQRQQQQEALRRLQQQQQQQQLA. The segment covering 924–936 has biased composition (polar residues); that stretch reads PSSSTWGQQSNTT. Residues 957 to 972 are compositionally biased toward basic and acidic residues; that stretch reads ERQLREEQRRQQRELM. Residue S993 is modified to Phosphoserine. A compositionally biased stretch (low complexity) spans 1013–1025; that stretch reads MQKQQQQQQQHQQ. A compositionally biased stretch (polar residues) spans 1026-1048; that stretch reads PNRARNNTHSNLHTSIGNSVWGS. A compositionally biased stretch (low complexity) spans 1090–1104; sequence NSTNKNKNNASLSKS. A Glycyl lysine isopeptide (Lys-Gly) (interchain with G-Cter in SUMO2) cross-link involves residue K1123. 2 disordered regions span residues 1195-1230 and 1247-1271; these read RAKQKANQQRQQQQLPQQQQQQPPQQPPQQPQQQDS and QSNNQQSNFEAVQSGKKKKKQKMVR. Residues 1202-1217 show a composition bias toward low complexity; that stretch reads QQRQQQQLPQQQQQQP. Residue S1284 is modified to Phosphoserine.

The protein belongs to the GIGYF family. As to quaternary structure, component of the 4EHP-GYF2 complex, at least composed of EIF4E2, GIGYF2 and ZNF598. Interacts (via the 4EHP-binding motif) with EIF4E2; the interaction is direct. Interacts with ZFP36/TTP (via P-P-P-P-G repeats); the interaction is direct. Interacts with GRB10. Interacts (via DDX6 motif) with DDX6 (via RecA-like domain 2). (Microbial infection) Interacts with SARS coronavirus-2/SARS-CoV-2 non-structural protein 2 (nsp2); the interaction enhances GIGYF2 binding to EIF4E2.

Its function is as follows. Key component of the 4EHP-GYF2 complex, a multiprotein complex that acts as a repressor of translation initiation. In the 4EHP-GYF2 complex, acts as a factor that bridges EIF4E2 to ZFP36/TTP, linking translation repression with mRNA decay. Also recruits and bridges the association of the 4EHP complex with the decapping effector protein DDX6, which is required for the ZFP36/TTP-mediated down-regulation of AU-rich mRNA. May act cooperatively with GRB10 to regulate tyrosine kinase receptor signaling, including IGF1 and insulin receptors. In association with EIF4E2, assists ribosome-associated quality control (RQC) by sequestering the mRNA cap, blocking ribosome initiation and decreasing the translational load on problematic messages. Part of a pathway that works in parallel to RQC-mediated degradation of the stalled nascent polypeptide. GIGYF2 and EIF4E2 work downstream and independently of ZNF598, which seems to work as a scaffold that can recruit them to faulty mRNA even if alternative recruitment mechanisms may exist. Functionally, (Microbial infection) Upon SARS coronavirus-2/SARS-CoV-2 infection, the interaction with non-structural protein 2 (nsp2) enhances GIGYF2 binding to EIF4E2 and increases repression of translation initiation of genes involved in antiviral innate immune response such as IFNB1. This Homo sapiens (Human) protein is GRB10-interacting GYF protein 2.